Here is a 251-residue protein sequence, read N- to C-terminus: Putative F-box protein PP2-B12 (251 aa).

The F-box domain maps to 1 to 46 (MNFLDLPEECIATMISFTSPFDACRISAVSKLLRSAADSNTTWERF).

The chain is Putative F-box protein PP2-B12 (PP2B12) from Arabidopsis thaliana (Mouse-ear cress).